The sequence spans 288 residues: G1/S-specific cyclin-D2 (288 aa).

In terms of domain architecture, Cyclin N-terminal spans 26–151 (LQNLLTIEER…VLGKLKWNLA (126 aa)). Residues 264 to 288 (QHNGSKSVEDPDQATTPTDVRDVDL) are disordered. Residue Ser-270 is modified to Phosphoserine. A Phosphothreonine modification is found at Thr-279.

It belongs to the cyclin family. Cyclin D subfamily. Interacts with either CDK4 or CDK6 protein kinase to form a serine/threonine kinase holoenzyme complex. The cyclin subunit imparts substrate specificity to the complex. Post-translationally, phosphorylation at Thr-279 by MAP kinases is required for ubiquitination and degradation by the DCX(AMBRA1) complex. In terms of processing, ubiquitinated by the DCX(AMBRA1) complex during the transition from G1 to S cell phase, leading to its degradation: ubiquitination is dependent on Thr-279 phosphorylation. The DCX(AMBRA1) complex represents the major regulator of CCND2 stability during the G1/S transition. Polyubiquitinated by the SCF(FBXL2) complex, leading to proteasomal degradation.

The protein resides in the nucleus. Its subcellular location is the cytoplasm. It localises to the nucleus membrane. In terms of biological role, regulatory component of the cyclin D2-CDK4 (DC) complex that phosphorylates and inhibits members of the retinoblastoma (RB) protein family including RB1 and regulates the cell-cycle during G(1)/S transition. Phosphorylation of RB1 allows dissociation of the transcription factor E2F from the RB/E2F complex and the subsequent transcription of E2F target genes which are responsible for the progression through the G(1) phase. Hypophosphorylates RB1 in early G(1) phase. Cyclin D-CDK4 complexes are major integrators of various mitogenenic and antimitogenic signals. In Rattus norvegicus (Rat), this protein is G1/S-specific cyclin-D2 (Ccnd2).